Here is a 447-residue protein sequence, read N- to C-terminus: Adenylosuccinate synthetase (447 aa).

GTP is bound by residues 35–41 (GDEGKGK) and 63–65 (GHT). Aspartate 36 (proton acceptor) is an active-site residue. Mg(2+) contacts are provided by aspartate 36 and glycine 63. IMP is bound by residues 36–39 (DEGK), 61–64 (NAGH), threonine 153, arginine 167, asparagine 245, threonine 260, and arginine 324. Histidine 64 acts as the Proton donor in catalysis. 320 to 326 (VTTKRKR) lines the substrate pocket. GTP contacts are provided by residues arginine 326, 352-354 (KLD), and 435-437 (GVG).

Belongs to the adenylosuccinate synthetase family. As to quaternary structure, homodimer. The cofactor is Mg(2+).

The protein localises to the cytoplasm. It carries out the reaction IMP + L-aspartate + GTP = N(6)-(1,2-dicarboxyethyl)-AMP + GDP + phosphate + 2 H(+). Its pathway is purine metabolism; AMP biosynthesis via de novo pathway; AMP from IMP: step 1/2. Its function is as follows. Plays an important role in the de novo pathway and in the salvage pathway of purine nucleotide biosynthesis. Catalyzes the first committed step in the biosynthesis of AMP from IMP. The polypeptide is Adenylosuccinate synthetase (Drosophila sechellia (Fruit fly)).